The following is a 524-amino-acid chain: Importin subunit alpha-1 (524 aa).

A disordered region spans residues Met1–Arg42. Residues Met1–Ser59 form the IBB domain.

This sequence belongs to the importin alpha family. As to quaternary structure, forms a complex with an importin beta subunit. In terms of tissue distribution, adult germline tissues.

The protein resides in the cytoplasm. Functionally, binds specifically and directly to substrates containing either a simple or bipartite NLS motif. Promotes docking of import substrates to the nuclear envelope. Seems to act as a cytosolic receptor for both simple and bipartite NLS motifs. The chain is Importin subunit alpha-1 (ima-1) from Caenorhabditis elegans.